The primary structure comprises 621 residues: tRNA uridine 5-carboxymethylaminomethyl modification enzyme MnmG (621 aa).

11 to 16 (GGGHAG) is an FAD binding site. NAD(+) is bound at residue 270 to 284 (GPRYCPSIEDKINRF).

The protein belongs to the MnmG family. As to quaternary structure, homodimer. Heterotetramer of two MnmE and two MnmG subunits. FAD serves as cofactor.

Its subcellular location is the cytoplasm. NAD-binding protein involved in the addition of a carboxymethylaminomethyl (cmnm) group at the wobble position (U34) of certain tRNAs, forming tRNA-cmnm(5)s(2)U34. The protein is tRNA uridine 5-carboxymethylaminomethyl modification enzyme MnmG of Helicobacter pylori (strain Shi470).